Reading from the N-terminus, the 240-residue chain is Ubiquinone biosynthesis O-methyltransferase (240 aa).

The S-adenosyl-L-methionine site is built by Arg44, Gly64, Asp85, and Met129.

It belongs to the methyltransferase superfamily. UbiG/COQ3 family.

It catalyses the reaction a 3-demethylubiquinol + S-adenosyl-L-methionine = a ubiquinol + S-adenosyl-L-homocysteine + H(+). The enzyme catalyses a 3-(all-trans-polyprenyl)benzene-1,2-diol + S-adenosyl-L-methionine = a 2-methoxy-6-(all-trans-polyprenyl)phenol + S-adenosyl-L-homocysteine + H(+). Its pathway is cofactor biosynthesis; ubiquinone biosynthesis. In terms of biological role, O-methyltransferase that catalyzes the 2 O-methylation steps in the ubiquinone biosynthetic pathway. In Escherichia coli O7:K1 (strain IAI39 / ExPEC), this protein is Ubiquinone biosynthesis O-methyltransferase.